The primary structure comprises 194 residues: 3-isopropylmalate dehydratase small subunit (194 aa).

The protein belongs to the LeuD family. LeuD type 1 subfamily. Heterodimer of LeuC and LeuD.

It catalyses the reaction (2R,3S)-3-isopropylmalate = (2S)-2-isopropylmalate. The protein operates within amino-acid biosynthesis; L-leucine biosynthesis; L-leucine from 3-methyl-2-oxobutanoate: step 2/4. Catalyzes the isomerization between 2-isopropylmalate and 3-isopropylmalate, via the formation of 2-isopropylmaleate. In Anoxybacillus flavithermus (strain DSM 21510 / WK1), this protein is 3-isopropylmalate dehydratase small subunit.